The primary structure comprises 513 residues: Na(+)/H(+) antiporter NhaB (513 aa).

The next 12 membrane-spanning stretches (helical) occupy residues 23–43, 52–72, 97–117, 120–140, 144–164, 202–222, 238–258, 303–323, 348–368, 391–411, 447–467, and 475–495; these read LALI…PFVA, IFTL…LLAI, LLLM…LFIF, LLLS…AAAF, FLDA…FYGI, LMMH…VGEP, FFLR…LTCL, AIIG…VGLI, TESL…AVII, LFYI…VGTI, ATPN…APLI, and VWMA…CVEF.

The protein belongs to the NhaB Na(+)/H(+) (TC 2.A.34) antiporter family.

Its subcellular location is the cell inner membrane. It catalyses the reaction 2 Na(+)(in) + 3 H(+)(out) = 2 Na(+)(out) + 3 H(+)(in). Na(+)/H(+) antiporter that extrudes sodium in exchange for external protons. The sequence is that of Na(+)/H(+) antiporter NhaB from Shigella boydii serotype 18 (strain CDC 3083-94 / BS512).